Consider the following 255-residue polypeptide: F-box/SPRY domain-containing protein 1 (255 aa).

Residues 3-51 enclose the F-box domain; it reads DPVAALCNFNVLEVIFSYLDLNDLSRCSQVCRSWHHFLNDENSDVWRWH. One can recognise a B30.2/SPRY domain in the interval 61 to 253; the sequence is MKSDLLTSVS…VSMVYLGTPL (193 aa).

This sequence belongs to the FBXO45/Fsn family. As to quaternary structure, component of an E3 ubiquitin ligase complex composed of hiw and Fsn.

It is found in the synapse. Its pathway is protein modification; protein ubiquitination. Functionally, required in the presynaptic motoneuron to down-regulate the levels of wnd and restrain synaptic terminal growth at the neuromuscular junction (NMJ). The protein is F-box/SPRY domain-containing protein 1 of Drosophila willistoni (Fruit fly).